Consider the following 417-residue polypeptide: MYSPDTTKYLIHLNLQAEGVVEKPDVVGAIFGQTEGLLGEDLDLRDLQRTGRVGRIDVQISSKRGETKGDILISSSLDRAETAILAASLETIDRVGPCVAHVVVEGIEDIRVTKRRKIVDRAKELLLDHFEDGSIDSYELLDEVREAIRVEKIGSLGDEKIPAGPNVMDSDAIIIVEGRADVINLLKYGIKNAVAVEGTNVPAQIVDLADKKTATAFLDGDRGGELILRELLQVADIDYVAFSPRGKSVEDMARKEIIKALRNKVPVEYVRDQFYGDVPGEKRTQDLRPQKPGASEQNSIKKENVENENESTPTSFEPISEPAPPVTLHDHMERVSGHLIARFLSPEFTILNETRADDVEMAIDQMTTEVSGLVIDRVVDQKLLDRLVGKGVEFVAARDFNGIIKRPLSIRLMKIAQ.

Residues 171–257 (DAIIIVEGRA…SVEDMARKEI (87 aa)) form the Toprim domain. Mg(2+)-binding residues include Glu177, Asp219, and Asp221. Residues 278–325 (VPGEKRTQDLRPQKPGASEQNSIKKENVENENESTPTSFEPISEPAPP) are disordered. Basic and acidic residues predominate over residues 279-289 (PGEKRTQDLRP).

It belongs to the archaeal DnaG primase family. As to quaternary structure, forms a ternary complex with MCM helicase and DNA. Requires Mg(2+) as cofactor.

It carries out the reaction ssDNA + n NTP = ssDNA/pppN(pN)n-1 hybrid + (n-1) diphosphate.. In terms of biological role, RNA polymerase that catalyzes the synthesis of short RNA molecules used as primers for DNA polymerase during DNA replication. In Methanosphaerula palustris (strain ATCC BAA-1556 / DSM 19958 / E1-9c), this protein is DNA primase DnaG.